Here is a 395-residue protein sequence, read N- to C-terminus: Phosphopentomutase (395 aa).

Positions 13, 288, 293, 329, 330, and 341 each coordinate Mn(2+).

This sequence belongs to the phosphopentomutase family. It depends on Mn(2+) as a cofactor.

It is found in the cytoplasm. The catalysed reaction is 2-deoxy-alpha-D-ribose 1-phosphate = 2-deoxy-D-ribose 5-phosphate. It catalyses the reaction alpha-D-ribose 1-phosphate = D-ribose 5-phosphate. It participates in carbohydrate degradation; 2-deoxy-D-ribose 1-phosphate degradation; D-glyceraldehyde 3-phosphate and acetaldehyde from 2-deoxy-alpha-D-ribose 1-phosphate: step 1/2. Its function is as follows. Isomerase that catalyzes the conversion of deoxy-ribose 1-phosphate (dRib-1-P) and ribose 1-phosphate (Rib-1-P) to deoxy-ribose 5-phosphate (dRib-5-P) and ribose 5-phosphate (Rib-5-P), respectively. In Agathobacter rectalis (strain ATCC 33656 / DSM 3377 / JCM 17463 / KCTC 5835 / VPI 0990) (Eubacterium rectale), this protein is Phosphopentomutase.